Consider the following 186-residue polypeptide: uncharacterized protein (186 aa).

3 disordered regions span residues 17 to 47 (LSGESEEDLAEERENPALVGSETAEPTEETF), 77 to 105 (EDKLLPSEPCADHPLAARPPSQAAAAAEA), and 121 to 164 (QQAA…PVAG). Residues 90–105 (PLAARPPSQAAAAAEA) show a composition bias toward low complexity. The span at 136–149 (PEPDPEPADEAAEE) shows a compositional bias: acidic residues.

This is an uncharacterized protein from Homo sapiens (Human).